The sequence spans 130 residues: Small ribosomal subunit protein uS11 (130 aa).

It belongs to the universal ribosomal protein uS11 family. Part of the 30S ribosomal subunit. Interacts with proteins S7 and S18. Binds to IF-3.

Located on the platform of the 30S subunit, it bridges several disparate RNA helices of the 16S rRNA. Forms part of the Shine-Dalgarno cleft in the 70S ribosome. This Campylobacter curvus (strain 525.92) protein is Small ribosomal subunit protein uS11.